A 118-amino-acid chain; its full sequence is Large ribosomal subunit protein uL24 (118 aa).

The protein belongs to the universal ribosomal protein uL24 family. Part of the 50S ribosomal subunit.

Functionally, one of two assembly initiator proteins, it binds directly to the 5'-end of the 23S rRNA, where it nucleates assembly of the 50S subunit. Its function is as follows. One of the proteins that surrounds the polypeptide exit tunnel on the outside of the subunit. This is Large ribosomal subunit protein uL24 from Prochlorococcus marinus (strain MIT 9301).